The primary structure comprises 134 residues: Arsenate reductase (134 aa).

Catalysis depends on nucleophile residues C11, C83, and C90. 2 disulfides stabilise this stretch: C11–C83 and C83–C90.

The protein belongs to the low molecular weight phosphotyrosine protein phosphatase family. Thioredoxin-coupled ArsC subfamily.

The protein resides in the cytoplasm. It carries out the reaction arsenate + [thioredoxin]-dithiol + H(+) = arsenite + [thioredoxin]-disulfide + H2O. Functionally, catalyzes the reduction of arsenate [As(V)] to arsenite [As(III)]. This Bacillus cereus (strain Q1) protein is Arsenate reductase.